Consider the following 447-residue polypeptide: Tubulin beta chain (447 aa).

The GTP site is built by Q11, E69, S138, G142, T143, G144, N204, and N226. A Mg(2+)-binding site is contributed by E69. The disordered stretch occupies residues Y425 to E447. Over residues E432–E447 the composition is skewed to acidic residues.

It belongs to the tubulin family. As to quaternary structure, dimer of alpha and beta chains. A typical microtubule is a hollow water-filled tube with an outer diameter of 25 nm and an inner diameter of 15 nM. Alpha-beta heterodimers associate head-to-tail to form protofilaments running lengthwise along the microtubule wall with the beta-tubulin subunit facing the microtubule plus end conferring a structural polarity. Microtubules usually have 13 protofilaments but different protofilament numbers can be found in some organisms and specialized cells. The cofactor is Mg(2+).

It is found in the cytoplasm. It localises to the cytoskeleton. Functionally, tubulin is the major constituent of microtubules, a cylinder consisting of laterally associated linear protofilaments composed of alpha- and beta-tubulin heterodimers. Microtubules grow by the addition of GTP-tubulin dimers to the microtubule end, where a stabilizing cap forms. Below the cap, tubulin dimers are in GDP-bound state, owing to GTPase activity of alpha-tubulin. This chain is Tubulin beta chain (tubA), found in Botryotinia fuckeliana (Noble rot fungus).